The chain runs to 146 residues: MSVIVAKINLLMEAGKAVPGPKIASVLGPRGIPVPKFCEAFNKVTSAANANYKVGDLVTVRISIKDDRSHDFTVSGPPVAYLLKQEAKLSKSSGNPGKELVAKLPMSAIIKVAKCKMVDMKVDNEDSAVKMVVGTAKSMGIEVVEG.

Belongs to the universal ribosomal protein uL11 family. In terms of assembly, part of the ribosomal stalk of the 50S ribosomal subunit. Interacts with L10 and the large rRNA to form the base of the stalk. L10 forms an elongated spine to which L12 dimers bind in a sequential fashion forming a multimeric L10(L12)X complex. Post-translationally, one or more lysine residues are methylated.

Its function is as follows. Forms part of the ribosomal stalk which helps the ribosome interact with GTP-bound translation factors. In Wolbachia pipientis wMel, this protein is Large ribosomal subunit protein uL11.